A 509-amino-acid polypeptide reads, in one-letter code: MSQRQVLQVFEQYQKARTQFVQMVAELATRPQNIETLQNAGVMSLLRTLLLDVVPTIQQTAALALGRLANYNDDLAEAVVKCDILPQLVYSLAEQNRFYKKAAAFVLRAVGKHSPQLAQAIVDCGALDTLVICLEDFDPGVKEAAAWALRYIARHNAELSQAVVDAGAVPLLVLCIQEPEIALKRIAASALSDIAKHSPELAQTVVDAGAVAHLAQMILNPDAKLKHQILSALSQVSKHSVDLAEMVVEAEIFPVVLTCLKDKDEYVKKNASTLIREIAKHTPELSQLVVNAGGVAAVIDCIGSCKGNTRLPGIMMLGYVAAHSENLAMAVIISKGVPQLSVCLSEEPEDHIKAAAAWALGQIGRHTPEHARAVAVTNTLPVLLSLYMSTESSEDLQVKSKKAIKNILQKCTYLPALEPFLYDAPPNILKHVVGQFSKVLPHDSKARRLFVTSGGLKKVQEIKAEPGSLLQEYINSINSCYPEEIVRYYSPGYSDTLLQRVDSYQPLNN.

8 ARM repeats span residues 31-70 (PQNIETLQNAGVMSLLRTLLLDVVPTIQQTAALALGRLAN), 73-112 (DDLAEAVVKCDILPQLVYSLAEQNRFYKKAAAFVLRAVGK), 115-154 (PQLAQAIVDCGALDTLVICLEDFDPGVKEAAAWALRYIAR), 157-196 (AELSQAVVDAGAVPLLVLCIQEPEIALKRIAASALSDIAK), 199-238 (PELAQTVVDAGAVAHLAQMILNPDAKLKHQILSALSQVSK), 241-280 (VDLAEMVVEAEIFPVVLTCLKDKDEYVKKNASTLIREIAK), 325-365 (ENLA…QIGR), and 368-409 (PEHA…NILQ).

As to quaternary structure, interacts with SPAG16 and SPAG17. As to expression, highly expressed in testis.

It localises to the cytoplasm. The protein resides in the cytoskeleton. It is found in the cell projection. The protein localises to the cilium. Its subcellular location is the flagellum. It localises to the cilium axoneme. Functionally, important for structural integrity of the central apparatus in the sperm tail and for flagellar motility. This is Sperm-associated antigen 6 (SPAG6) from Homo sapiens (Human).